Reading from the N-terminus, the 291-residue chain is MQSQTNPNPSLPDDLILSCVARVSRLYYPALSLVSKSFRSLIASPELYKTRSLLDRTESCLYILYCTSNTWHEGPRLRVKLMSCTACVLDEKIYVSGRCKDGDSMTFQVFDTNTQTWDPLSVPCSETKHDFHYKIVRFDGKLHLVSYKGVDAYNSKEGRWDLVTPSIEHNKYLYDCYRNIGNVWYTIVKGDISTSVWWYHSEEREWRDLKGMVGLPKFPIDACLRMVDYGGKMAVLWDDYLPGRRKKMIWCAEIALERRGSLEIWGKVEWFAHVLTVPRQYEFVKVLAATL.

The F-box domain maps to 5–51 (TNPNPSLPDDLILSCVARVSRLYYPALSLVSKSFRSLIASPELYKTR). Kelch repeat units follow at residues 46 to 91 (ELYK…VLDE), 92 to 140 (KIYV…RFDG), 142 to 187 (LHLV…WYTI), and 189 to 232 (KGDI…YGGK).

In Arabidopsis thaliana (Mouse-ear cress), this protein is F-box/kelch-repeat protein At5g38670.